The following is a 63-amino-acid chain: Large ribosomal subunit protein bL28 (63 aa).

It belongs to the bacterial ribosomal protein bL28 family.

The protein is Large ribosomal subunit protein bL28 of Beutenbergia cavernae (strain ATCC BAA-8 / DSM 12333 / CCUG 43141 / JCM 11478 / NBRC 16432 / NCIMB 13614 / HKI 0122).